We begin with the raw amino-acid sequence, 327 residues long: Petrobactin synthase (327 aa).

It catalyses the reaction N(8)-citryl-spermidine + 3,4-dihydroxybenzoyl-[aryl-carrier protein] = N(1)-(3,4-dihydroxybenzoyl)-N(8)-citryl-spermidine + holo-[aryl-carrier protein] + H(+). It carries out the reaction N(8),N'(8)-citryl-bis(spermidine) + 3,4-dihydroxybenzoyl-[aryl-carrier protein] = N(1)-(3,4-dihydroxybenzoyl)-N(8),N'(8)-citryl-bis(spermidine) + holo-[aryl-carrier protein] + H(+). The catalysed reaction is N(1)-(3,4-dihydroxybenzoyl)-N(8),N'(8)-citryl-bis(spermidine) + 3,4-dihydroxybenzoyl-[aryl-carrier protein] = petrobactin + holo-[aryl-carrier protein] + H(+). It functions in the pathway siderophore biosynthesis; petrobactin biosynthesis. Involved in the biosynthesis of petrobactin, a catecholate siderophore that functions in both iron acquisition and virulence. Transfers the activated 3,4-dihydroxybenzoate (3,4-DHBA) moiety from 3,4-DHBA-loaded AsbD to different receipient molecules, including N-citryl-spermidine, N8,N'8-citryl-bis(spermidine) and N1-(3,4-dihydroxybenzoyl)-N8,N'8-citryl-bis(spermidine). Also catalyzes the transfer of the activated 3,4-DHBA moiety from 3,4-DHBA-loaded AsbD to spermidine to generate DHB-spermidine (DHB-SP). The polypeptide is Petrobactin synthase (Bacillus anthracis).